The primary structure comprises 646 residues: P-selectin (646 aa).

Positions 1–41 (MASCPKAIWNWRFQRAVFRTVQLLCFSVLIFEVINQKEVSA) are cleaved as a signal peptide. Residues 42–587 (WTYHYSNKTY…QAGPLTIQET (546 aa)) are Extracellular-facing. N-linked (GlcNAc...) asparagine glycosylation is found at asparagine 48, asparagine 54, and asparagine 80. A C-type lectin domain is found at 58–158 (AFCQKYYTDL…PCWKRKRALC (101 aa)). Disulfide bonds link cysteine 60–cysteine 158, cysteine 131–cysteine 150, cysteine 163–cysteine 174, cysteine 168–cysteine 183, cysteine 185–cysteine 194, cysteine 200–cysteine 244, cysteine 230–cysteine 257, cysteine 262–cysteine 306, cysteine 292–cysteine 319, cysteine 324–cysteine 368, cysteine 354–cysteine 381, cysteine 386–cysteine 430, cysteine 416–cysteine 443, cysteine 458–cysteine 502, cysteine 488–cysteine 515, cysteine 520–cysteine 564, and cysteine 550–cysteine 577. 3 residues coordinate Ca(2+): glutamate 121, asparagine 123, and asparagine 124. An a carbohydrate-binding site is contributed by asparagine 123. Residues glutamate 133 and asparagine 146 each coordinate a carbohydrate. Asparagine 146 and aspartate 147 together coordinate Ca(2+). The EGF-like domain occupies 159–195 (YRASCQDMSCSKQGECIETIGNYTCSCYPGFYGPECE). Asparagine 180 carries N-linked (GlcNAc...) asparagine glycosylation. Sushi domains are found at residues 198-259 (RECG…QCVA), 260-321 (VQCP…VCKA), 322-383 (LQCQ…ECQA), 384-445 (VTCA…TCEE), 456-517 (VQCP…TCRA), and 518-579 (VKCA…TCQA). Asparagine 212 and asparagine 219 each carry an N-linked (GlcNAc...) asparagine glycan. Asparagine 336 carries an N-linked (GlcNAc...) asparagine glycan. Residue asparagine 481 is glycosylated (N-linked (GlcNAc...) asparagine). Residues asparagine 532, asparagine 539, and asparagine 557 are each glycosylated (N-linked (GlcNAc...) asparagine). Residues 588-611 (LTYVGGAAAGTTGLVTGSILLALL) traverse the membrane as a helical segment. At 612 to 646 (RRRCRQKDDGKSPLNPQSHLGTYGVFTNAAFDPSP) the chain is on the cytoplasmic side. An Endocytosis signal motif is present at residues 634–637 (YGVF). Residues 637–646 (FTNAAFDPSP) are interaction with SNX17.

This sequence belongs to the selectin/LECAM family. In terms of assembly, interacts with SNX17. Interacts with SELPLG/PSGL1 and PODXL2 and mediates neutrophil adhesion and leukocyte rolling. This interaction requires the sialyl-Lewis X epitope of SELPLG and PODXL2, and specific tyrosine sulfation on SELPLG. Interacts (via C-type lectin domain) with alpha-IIb/beta3 integrin ITGA2B:ITGB3 and alpha-V/beta-3 integrin ITGAV:ITGB3. Interacts with alpha5/beta1 integrin ITGA5:ITGB1 and alpha4/beta1 integrin ITGA4:ITGB. In terms of tissue distribution, stored in the alpha-granules of platelets and Weibel-Palade bodies of endothelial cells. Upon cell activation by agonists, P-selectin is transported rapidly to the cell surface.

The protein resides in the cell membrane. In terms of biological role, ca(2+)-dependent receptor for myeloid cells that binds to carbohydrates on neutrophils and monocytes. Mediates the interaction of activated endothelial cells or platelets with leukocytes. The ligand recognized is sialyl-Lewis X. Mediates rapid rolling of leukocyte rolling over vascular surfaces during the initial steps in inflammation through interaction with SELPLG. Mediates cell-cell interactions and cell adhesion via the interaction with integrin alpha-IIb/beta3 (ITGA2B:ITGB3) and integrin alpha-V/beta-3 (ITGAV:ITGB3). In Bos taurus (Bovine), this protein is P-selectin (SELP).